The following is a 104-amino-acid chain: MTAPTTMTFFERFETDILSGKKTITIRDESERNYQPGSVVEVSTLEQGRVFCNLKIISVEPILFYDLGEFHAQQENMTLDVLKDVIQDIYPGISQLYVVSYELV.

The ASCH domain occupies 7 to 95 (MTFFERFETD…IQDIYPGISQ (89 aa)). The active-site Proton acceptor is the lysine 22. The active-site Nucleophile is threonine 25. Glutamate 75 acts as the Proton donor in catalysis.

The protein belongs to the N(4)-acetylcytidine amidohydrolase family.

The enzyme catalyses N(4)-acetylcytidine + H2O = cytidine + acetate + H(+). It catalyses the reaction N(4)-acetyl-2'-deoxycytidine + H2O = 2'-deoxycytidine + acetate + H(+). It carries out the reaction N(4)-acetylcytosine + H2O = cytosine + acetate + H(+). Catalyzes the hydrolysis of N(4)-acetylcytidine (ac4C). This Vibrio atlanticus (strain LGP32) (Vibrio splendidus (strain Mel32)) protein is N(4)-acetylcytidine amidohydrolase.